The sequence spans 83 residues: Tetracenomycin polyketide synthase acyl carrier protein (83 aa).

One can recognise a Carrier domain in the interval 3 to 83; the sequence is QIGLPRLVEI…VNTETAGEVA (81 aa). At Ser-41 the chain carries O-(pantetheine 4'-phosphoryl)serine.

As to quaternary structure, the tetracenomycin polyketide synthase (TCM PKS) is composed of a ketosynthase complex (TcmKL), an acyl carrier protein (TcmM), a cyclase (TcmN) and a probable second cyclase (TcmJ). It depends on pantetheine 4'-phosphate as a cofactor. 4'-phosphopantetheine is transferred from CoA to a specific serine of apo-ACP.

The catalysed reaction is 10 malonyl-CoA + 8 H(+) = tetracenomycin F2 + 10 CO2 + 10 CoA + 2 H2O. Its pathway is antibiotic biosynthesis; tetracenomycin C biosynthesis. In terms of biological role, involved in the biosynthesis of tetracenomycin C (TCM C). Part of a type II polyketide synthase (PKS) that catalyzes the synthesis of tetracenomycin F2 (TCM F2), a precursor of TCM C, from malonyl-CoA. TcmM is an acyl carrier protein that serves as an acceptor of malonate from malonyl-CoA and acts as the tether for the substrates and intermediates of polyketide assembly. The malonyl CoA-acyl carrier protein transacylase FabD (MCT) is required to catalyze the transacylation between malonyl-CoA and TcmM, although a relatively slow spontaneous self-malonylation of TcmM also occurs in a reaction without the MCT. The polypeptide is Tetracenomycin polyketide synthase acyl carrier protein (Streptomyces glaucescens).